The chain runs to 256 residues: Thiazole synthase (256 aa).

Lys98 acts as the Schiff-base intermediate with DXP in catalysis. 1-deoxy-D-xylulose 5-phosphate-binding positions include Gly159, 185–186, and 207–208; these read AG and NT.

Belongs to the ThiG family. Homotetramer. Forms heterodimers with either ThiH or ThiS.

It is found in the cytoplasm. It carries out the reaction [ThiS sulfur-carrier protein]-C-terminal-Gly-aminoethanethioate + 2-iminoacetate + 1-deoxy-D-xylulose 5-phosphate = [ThiS sulfur-carrier protein]-C-terminal Gly-Gly + 2-[(2R,5Z)-2-carboxy-4-methylthiazol-5(2H)-ylidene]ethyl phosphate + 2 H2O + H(+). Its pathway is cofactor biosynthesis; thiamine diphosphate biosynthesis. In terms of biological role, catalyzes the rearrangement of 1-deoxy-D-xylulose 5-phosphate (DXP) to produce the thiazole phosphate moiety of thiamine. Sulfur is provided by the thiocarboxylate moiety of the carrier protein ThiS. In vitro, sulfur can be provided by H(2)S. The polypeptide is Thiazole synthase (Syntrophobacter fumaroxidans (strain DSM 10017 / MPOB)).